The following is a 367-amino-acid chain: Phosphoribosylaminoimidazole-succinocarboxamide synthase (367 aa).

Belongs to the SAICAR synthetase family.

It catalyses the reaction 5-amino-1-(5-phospho-D-ribosyl)imidazole-4-carboxylate + L-aspartate + ATP = (2S)-2-[5-amino-1-(5-phospho-beta-D-ribosyl)imidazole-4-carboxamido]succinate + ADP + phosphate + 2 H(+). It functions in the pathway purine metabolism; IMP biosynthesis via de novo pathway; 5-amino-1-(5-phospho-D-ribosyl)imidazole-4-carboxamide from 5-amino-1-(5-phospho-D-ribosyl)imidazole-4-carboxylate: step 1/2. The polypeptide is Phosphoribosylaminoimidazole-succinocarboxamide synthase (Vibrio vulnificus (strain CMCP6)).